The sequence spans 832 residues: Polyphosphoinositide phosphatase (832 aa).

The SAC domain maps to 145–491 (IEKVDLARTF…GDAIALQYGG (347 aa)).

Component of the PI(3,5)P2 regulatory complex. Mg(2+) is required as a cofactor.

It is found in the cytoplasm. The protein resides in the vacuole membrane. It catalyses the reaction a 1,2-diacyl-sn-glycero-3-phospho-(1D-myo-inositol-3,5-bisphosphate) + H2O = a 1,2-diacyl-sn-glycero-3-phospho-(1D-myo-inositol-3-phosphate) + phosphate. In terms of biological role, the PI(3,5)P2 regulatory complex regulates both the synthesis and turnover of phosphatidylinositol 3,5-bisphosphate (PtdIns(3,5)P2). The chain is Polyphosphoinositide phosphatase from Schizosaccharomyces pombe (strain 972 / ATCC 24843) (Fission yeast).